The sequence spans 153 residues: MANKDAALKALIEPVVTAMGFELWGVDYLSQGKHSRLVIYIESADGVTVDDCAAVSRQVSGVLDVEDPISGEYRLEVSSPGMDRPLFTLEQFASFKGSHVKVKLSTPFEGRRKFQGQLAGVEGDEILLHLDGQEYCFPIESIEQARVVPQFDN.

The protein belongs to the RimP family.

Its subcellular location is the cytoplasm. Required for maturation of 30S ribosomal subunits. This is Ribosome maturation factor RimP from Chromohalobacter salexigens (strain ATCC BAA-138 / DSM 3043 / CIP 106854 / NCIMB 13768 / 1H11).